Reading from the N-terminus, the 320-residue chain is ATP-dependent 6-phosphofructokinase (320 aa).

ATP is bound at residue Gly11. Position 21 to 25 (Arg21 to Arg25) interacts with ADP. Residues Arg72–Cys73 and Gly102–Ser105 each bind ATP. Mg(2+) is bound at residue Asp103. Thr125–Asp127 is a binding site for substrate. Asp127 acts as the Proton acceptor in catalysis. Residue Arg154 coordinates ADP. Substrate-binding positions include Arg162 and Met169 to Arg171. ADP contacts are provided by residues Gly185–Glu187 and Lys214–His216. Substrate contacts are provided by residues Glu223, Arg244, and His250–Arg253.

Belongs to the phosphofructokinase type A (PFKA) family. ATP-dependent PFK group I subfamily. Prokaryotic clade 'B1' sub-subfamily. Homotetramer. The cofactor is Mg(2+).

It localises to the cytoplasm. It carries out the reaction beta-D-fructose 6-phosphate + ATP = beta-D-fructose 1,6-bisphosphate + ADP + H(+). The protein operates within carbohydrate degradation; glycolysis; D-glyceraldehyde 3-phosphate and glycerone phosphate from D-glucose: step 3/4. With respect to regulation, allosterically activated by ADP and other diphosphonucleosides, and allosterically inhibited by phosphoenolpyruvate. Functionally, catalyzes the phosphorylation of D-fructose 6-phosphate to fructose 1,6-bisphosphate by ATP, the first committing step of glycolysis. The sequence is that of ATP-dependent 6-phosphofructokinase from Clostridium botulinum (strain Eklund 17B / Type B).